A 529-amino-acid polypeptide reads, in one-letter code: Alkaline phosphatase, germ cell type (529 aa).

A signal peptide spans 1 to 18 (MWGACLLLLGLSLQVCPS). D60 contributes to the Mg(2+) binding site. The Zn(2+) site is built by D60 and S110. Catalysis depends on S110, which acts as the Phosphoserine intermediate. C139 and C201 are joined by a disulfide. N140 carries an N-linked (GlcNAc...) asparagine glycan. S173 serves as a coordination point for Mg(2+). E234 contacts Ca(2+). N-linked (GlcNAc...) asparagine glycosylation is found at N267 and N277. 3 residues coordinate Ca(2+): F287, E288, and D303. A Mg(2+)-binding site is contributed by E329. The Zn(2+) site is built by D334, H338, D375, H376, and H450. Residues C485 and C492 are joined by a disulfide bond. S502 is lipidated: GPI-anchor amidated serine. A propeptide spans 503–529 (AVSPGYMSTLLCLLAGKMLMLMAAAEP) (removed in mature form).

This sequence belongs to the alkaline phosphatase family. Homodimer. Mg(2+) serves as cofactor. The cofactor is Zn(2+). Requires Ca(2+) as cofactor. Embryo and testis.

The protein resides in the cell membrane. The enzyme catalyses a phosphate monoester + H2O = an alcohol + phosphate. Its activity is regulated as follows. Inhibited by L-leucine, EDTA and heat. Alkaline phosphatase that can hydrolyze various phosphate compounds. This chain is Alkaline phosphatase, germ cell type (Alpg), found in Mus musculus (Mouse).